We begin with the raw amino-acid sequence, 442 residues long: Hydrolase phmG (442 aa).

Residue Ser259 is the Nucleophile of the active site.

The protein belongs to the AB hydrolase superfamily. FUS2 hydrolase family. As to quaternary structure, homodimer.

The protein operates within mycotoxin biosynthesis. Hydrolyase; part of the gene cluster that mediates the biosynthesis of the mycotoxins phomacins, leucine-derived cytochalasans with potent actin polymerization-inhibitory activities and monocot-specific antigerminative activities. The first step in the pathway is catalyzed by the hybrid PKS-NRPS phmA, assisted by the enoyl reductase phmE, that are responsible for fusion of the leucine precursor and the polyketide backbone to produce a 2-pyrrolidone intermediate. The polyketide synthase module (PKS) of phmA is responsible for the synthesis of the polyketide backbone and the downstream nonribosomal peptide synthetase (NRPS) amidates the carboxyl end of the polyketide with the leucine precursor. Because phmA lacks a designated enoylreductase (ER) domain, the required activity is provided the enoyl reductase phmE. Reduction by the hydrolyase phmG, followed by dehydration and intra-molecular Diels-Alder cyclization by the Diels-Alderase phmD then yield the required isoindolone-fused macrocycle. A number of oxidative steps catalyzed by the tailoring cytochrome P450 monooxygenase phmB, the FAD-linked oxidoreductase phmC and the short-chain dehydrogenase/reductase phmF, are further required to afford the final products, phomacin D and phomacin E. The protein is Hydrolase phmG of Phaeosphaeria nodorum (strain SN15 / ATCC MYA-4574 / FGSC 10173) (Glume blotch fungus).